An 84-amino-acid polypeptide reads, in one-letter code: Magnetosome protein MamR (84 aa).

It belongs to the magnetosome MamR family.

It is found in the magnetosome. Functionally, may play a role in controlling magnetite number and size but not in control of magnetite morphology. This Paramagnetospirillum magneticum (strain ATCC 700264 / AMB-1) (Magnetospirillum magneticum) protein is Magnetosome protein MamR.